Reading from the N-terminus, the 91-residue chain is Small ribosomal subunit protein bS16 (91 aa).

This sequence belongs to the bacterial ribosomal protein bS16 family.

The sequence is that of Small ribosomal subunit protein bS16 from Staphylococcus aureus (strain Mu3 / ATCC 700698).